Here is a 351-residue protein sequence, read N- to C-terminus: Mannonate dehydratase (351 aa).

This sequence belongs to the mannonate dehydratase family. Requires Fe(2+) as cofactor. Mn(2+) serves as cofactor.

It carries out the reaction D-mannonate = 2-dehydro-3-deoxy-D-gluconate + H2O. Its pathway is carbohydrate metabolism; pentose and glucuronate interconversion. Catalyzes the dehydration of D-mannonate. This chain is Mannonate dehydratase, found in Clostridium acetobutylicum (strain ATCC 824 / DSM 792 / JCM 1419 / IAM 19013 / LMG 5710 / NBRC 13948 / NRRL B-527 / VKM B-1787 / 2291 / W).